Reading from the N-terminus, the 467-residue chain is tRNA-2-methylthio-N(6)-dimethylallyladenosine synthase (467 aa).

Residues 4 to 124 enclose the MTTase N-terminal domain; the sequence is RKLFIKSYGC…LPEMVAKVER (121 aa). [4Fe-4S] cluster contacts are provided by Cys13, Cys49, Cys87, Cys161, Cys165, and Cys168. Positions 147 to 379 constitute a Radical SAM core domain; that stretch reads QAHGPSAFLS…QARLVEIQQA (233 aa). Residues 382–444 enclose the TRAM domain; sequence QACVGRPMDV…SNSLAARLVE (63 aa).

The protein belongs to the methylthiotransferase family. MiaB subfamily. Monomer. [4Fe-4S] cluster is required as a cofactor.

The protein localises to the cytoplasm. It carries out the reaction N(6)-dimethylallyladenosine(37) in tRNA + (sulfur carrier)-SH + AH2 + 2 S-adenosyl-L-methionine = 2-methylsulfanyl-N(6)-dimethylallyladenosine(37) in tRNA + (sulfur carrier)-H + 5'-deoxyadenosine + L-methionine + A + S-adenosyl-L-homocysteine + 2 H(+). Catalyzes the methylthiolation of N6-(dimethylallyl)adenosine (i(6)A), leading to the formation of 2-methylthio-N6-(dimethylallyl)adenosine (ms(2)i(6)A) at position 37 in tRNAs that read codons beginning with uridine. The sequence is that of tRNA-2-methylthio-N(6)-dimethylallyladenosine synthase from Rhodospirillum rubrum (strain ATCC 11170 / ATH 1.1.1 / DSM 467 / LMG 4362 / NCIMB 8255 / S1).